Reading from the N-terminus, the 374-residue chain is Tomoregulin-2 (374 aa).

The N-terminal stretch at 1–39 (MVLWESPRQCSSWTLCEGFCWLLLLPVMLLIVARPVKLA) is a signal peptide. At 40-320 (AFPTSLSDCQ…VPGPVRFQYV (281 aa)) the chain is on the extracellular side. Asn55 is a glycosylation site (N-linked (GlcNAc...) asparagine). 2 Kazal-like domains span residues 90 to 137 (VCQF…SCAT) and 181 to 229 (VCNI…RCQD). Intrachain disulfides connect Cys91/Cys121, Cys95/Cys114, Cys103/Cys135, Cys182/Cys213, Cys186/Cys206, Cys195/Cys227, Cys265/Cys278, Cys273/Cys289, and Cys291/Cys300. Positions 261–301 (HHIPCPEHYNGFCMHGKCEHSINMQEPSCRCDAGYTGQHCE) constitute an EGF-like domain. The tract at residues 303–320 (KDYSVLYVVPGPVRFQYV) is required for shedding. The helical transmembrane segment at 321–341 (LIAAVIGTIQIAVICVVVLCI) threads the bilayer. Topologically, residues 342-374 (TRKCPRSNRIHRQKQNTGHYSSDNTTRASTRLI) are cytoplasmic. The disordered stretch occupies residues 353–374 (RQKQNTGHYSSDNTTRASTRLI). Positions 356 to 374 (QNTGHYSSDNTTRASTRLI) are enriched in polar residues.

This sequence belongs to the tomoregulin family. O-glycosylated; contains chondroitin sulfate glycosaminoglycans. Post-translationally, a soluble form (TMEFF2-ECD) is produced by proteolytic shedding. This shedding can be induced by phorbol ester or pro-inflammatory cytokines such as TNFalpha, and is mediated by a metalloproteinase ADAM.

It is found in the membrane. Its function is as follows. May be a survival factor for hippocampal and mesencephalic neurons. The shedded form may up-regulate cell proliferation. The sequence is that of Tomoregulin-2 (TMEFF2) from Bos taurus (Bovine).